Consider the following 208-residue polypeptide: Large ribosomal subunit protein uL4 (208 aa).

Positions 45–89 are disordered; the sequence is RQGTHAHKNRSAVSGGGKKPWRQKGTGRARQGSTRSPQWRGGGTV.

It belongs to the universal ribosomal protein uL4 family. In terms of assembly, part of the 50S ribosomal subunit.

In terms of biological role, one of the primary rRNA binding proteins, this protein initially binds near the 5'-end of the 23S rRNA. It is important during the early stages of 50S assembly. It makes multiple contacts with different domains of the 23S rRNA in the assembled 50S subunit and ribosome. Functionally, forms part of the polypeptide exit tunnel. This chain is Large ribosomal subunit protein uL4, found in Lactococcus lactis subsp. lactis (strain IL1403) (Streptococcus lactis).